Consider the following 500-residue polypeptide: Maturase K (500 aa).

Belongs to the intron maturase 2 family. MatK subfamily.

The protein localises to the plastid. Its subcellular location is the chloroplast. Functionally, usually encoded in the trnK tRNA gene intron. Probably assists in splicing its own and other chloroplast group II introns. The chain is Maturase K from Proboscidea louisianica (Louisiana Devil's-claw).